Consider the following 411-residue polypeptide: Small ribosomal subunit protein bS1c (411 aa).

The transit peptide at 1-41 (MASLAQQLAGGLRCPPLSNSNLSKPFSPKHTLKPRFSPIVS) directs the protein to the chloroplast. 3 S1 motif domains span residues 96-166 (GSRV…LSLR), 184-248 (DVVV…MSNR), and 261-329 (GSVV…LSTK).

The protein belongs to the bacterial ribosomal protein bS1 family. Component of the chloroplast small ribosomal subunit (SSU). Mature 70S chloroplast ribosomes of higher plants consist of a small (30S) and a large (50S) subunit. The 30S small subunit contains 1 molecule of ribosomal RNA (16S rRNA) and 24 different proteins. The 50S large subunit contains 3 rRNA molecules (23S, 5S and 4.5S rRNA) and 33 different proteins.

The protein localises to the plastid. It localises to the chloroplast. In terms of biological role, component of the chloroplast ribosome (chloro-ribosome), a dedicated translation machinery responsible for the synthesis of chloroplast genome-encoded proteins, including proteins of the transcription and translation machinery and components of the photosynthetic apparatus. Actively engaged in the initiation complex formation via a strong mRNA-binding activity. Possesses a poly(A)-binding activity which might play a role as a control element in chloroplast mRNA translation. The polypeptide is Small ribosomal subunit protein bS1c (RPS1) (Spinacia oleracea (Spinach)).